A 412-amino-acid chain; its full sequence is L-threonine:uridine-5'-aldehyde transaldolase (412 aa).

K229 is subject to N6-(pyridoxal phosphate)lysine.

The protein belongs to the SHMT family. Pyridoxal 5'-phosphate serves as cofactor.

The catalysed reaction is uridine-5'-aldehyde + L-threonine = (5'S,6'S)-C-glycyluridine + acetaldehyde. Its pathway is antibiotic biosynthesis. Functionally, transaldolase involved in the biosynthesis of the capuramycin-type nucleoside antibiotic A-102395. Catalyzes the condensation of L-threonine and uridine-5'-aldehyde to form 5'-C-glycyluridine (GlyU). This chain is L-threonine:uridine-5'-aldehyde transaldolase, found in Amycolatopsis sp.